The primary structure comprises 393 residues: Double-stranded RNA-binding protein 5 (393 aa).

2 DRBM domains span residues 1 to 70 (MYKN…VLSS) and 87 to 155 (IYKN…SLKK). 2 disordered regions span residues 220–251 (ASSS…KSSK) and 335–371 (NPNL…QEKK). Residues 347–361 (VNEFTSSNNSCSVLN) show a composition bias toward polar residues.

Heterodimer with DRB1, DRB2 or DRB4. Interacts with DCL1 and DCL3. In terms of tissue distribution, expressed in the shoot apical meristem (SAM).

Functionally, binds double-stranded RNA. May be involved in RNA-mediated silencing. This chain is Double-stranded RNA-binding protein 5 (DRB5), found in Arabidopsis thaliana (Mouse-ear cress).